Reading from the N-terminus, the 1275-residue chain is Inner capsid protein lambda-1 (1275 aa).

Basic residues predominate over residues 1 to 12 (MKRIPRKTKGKS). Residues 1–149 (MKRIPRKTKG…DNEGGSNQKP (149 aa)) form a disordered region. 2 stretches are compositionally biased toward basic and acidic residues: residues 18-35 (DSTE…DKQN) and 75-117 (NNDE…DKSK). The segment covering 118 to 149 (AQVTYSDTGINNANELSRSGNVDNEGGSNQKP) has biased composition (polar residues). The C2H2-type zinc finger occupies 181-203 (YQCHVCSAVLFSPLDLDAHVASH).

The protein belongs to the orthoreovirus lambda-1 protein family. Homodecamer; each decamer is made up of two conformers of VP2, called VP2A and VP2B. 12 homodecamers assemble to form an icosahedral capsid. Interacts with protein mu-NS; in viral inclusions. Mg(2+) is required as a cofactor. Mn(2+) serves as cofactor.

Its subcellular location is the virion. The catalysed reaction is ATP + H2O = ADP + phosphate + H(+). Functionally, inner capsid protein that self-assembles to form an icosahedral capsid with a T=2 symmetry, which consists of 120 copies of VP2, with channels at each of its five-fold vertices. This capsid constitutes the innermost concentric layer of the viral mature particle. Its function is as follows. Displays NTPase, RNA 5'-triphosphatase (RTPase) and RNA helicase activities. Helicase activity might be involved in unwinding or reannealing dsRNA during RNA synthesis. RTPase enzymatic activity represents the first step in RNA capping, which yields a 5'-diphosphorylated plus-strand RNA. This Reovirus type 3 (strain Dearing) (T3D) protein is Inner capsid protein lambda-1 (L3).